Consider the following 99-residue polypeptide: DNA-directed RNA polymerase subunit omega (99 aa).

The disordered stretch occupies residues 55 to 99 (EAGTVISDPNPEEKRERLRIEREERKRQREQEQKELENRLRDEKN). Residues 65 to 99 (PEEKRERLRIEREERKRQREQEQKELENRLRDEKN) show a composition bias toward basic and acidic residues.

Belongs to the RNA polymerase subunit omega family. As to quaternary structure, the RNAP catalytic core consists of 2 alpha, 1 beta, 1 beta' and 1 omega subunit. When a sigma factor is associated with the core the holoenzyme is formed, which can initiate transcription.

The enzyme catalyses RNA(n) + a ribonucleoside 5'-triphosphate = RNA(n+1) + diphosphate. Its function is as follows. Promotes RNA polymerase assembly. Latches the N- and C-terminal regions of the beta' subunit thereby facilitating its interaction with the beta and alpha subunits. The protein is DNA-directed RNA polymerase subunit omega of Enterococcus faecalis (strain ATCC 700802 / V583).